The chain runs to 223 residues: Deoxyribose-phosphate aldolase (223 aa).

The active-site Proton donor/acceptor is the Asp-91. Residue Lys-153 is the Schiff-base intermediate with acetaldehyde of the active site. Lys-182 serves as the catalytic Proton donor/acceptor.

Belongs to the DeoC/FbaB aldolase family. DeoC type 1 subfamily.

It localises to the cytoplasm. The catalysed reaction is 2-deoxy-D-ribose 5-phosphate = D-glyceraldehyde 3-phosphate + acetaldehyde. It functions in the pathway carbohydrate degradation; 2-deoxy-D-ribose 1-phosphate degradation; D-glyceraldehyde 3-phosphate and acetaldehyde from 2-deoxy-alpha-D-ribose 1-phosphate: step 2/2. Its function is as follows. Catalyzes a reversible aldol reaction between acetaldehyde and D-glyceraldehyde 3-phosphate to generate 2-deoxy-D-ribose 5-phosphate. This is Deoxyribose-phosphate aldolase from Yersinia pseudotuberculosis serotype O:1b (strain IP 31758).